The primary structure comprises 452 residues: Glycine receptor subunit alpha-2 (452 aa).

Positions 1–27 (MNRQLVNILTALFAFFLGTNHFREAFC) are cleaved as a signal peptide. The Extracellular segment spans residues 28–256 (KDHDSRSGKH…KFHLERQMGY (229 aa)). Asparagine 72 carries N-linked (GlcNAc...) asparagine glycosylation. Arginine 99 provides a ligand contact to glycine. Arginine 99 is a binding site for strychnine. The N-linked (GlcNAc...) asparagine glycan is linked to asparagine 103. Serine 163 is a glycine binding site. Cysteine 172 and cysteine 186 are oxidised to a cystine. The Zn(2+) site is built by glutamate 226 and glutamate 228. Cysteine 232 and cysteine 243 are joined by a disulfide. Residue threonine 238 participates in glycine binding. Residue histidine 249 participates in Zn(2+) binding. The chain crosses the membrane as a helical span at residues 257 to 278 (YLIQMYIPSLLIVILSWVSFWI). The Cytoplasmic segment spans residues 279–283 (NMDAA). Residues 284–304 (PARVALGITTVLTMTTQSSGS) form a helical membrane-spanning segment. Residues 305–315 (RASLPKVSYVK) are Extracellular-facing. Residues 316–336 (AIDIWMAVCLLFVFAALLEYA) traverse the membrane as a helical segment. Topologically, residues 337–420 (AVNFVSRQHK…FVDRAKRIDT (84 aa)) are cytoplasmic. Residues 421 to 441 (ISRAAFPLAFLIFNIFYWITY) traverse the membrane as a helical segment. The Extracellular portion of the chain corresponds to 442-452 (KIIRHEDVHKK).

It belongs to the ligand-gated ion channel (TC 1.A.9) family. Glycine receptor (TC 1.A.9.3) subfamily. GLRA2 sub-subfamily. In terms of assembly, interacts with GLRB. Heteropentamer composed of GLRA2 and GLRB; functional GLRB-GLRA2 heteropentamers contain four GLRA2 subunits and one GLRB subunit, although alternative subunit composition cannot be excluded. Homopentamer (in vitro). Both homopentamers and heteropentamers form functional ion channels, but their characteristics are subtly different.

It is found in the postsynaptic cell membrane. The protein localises to the synapse. The protein resides in the cell membrane. It localises to the cell projection. It carries out the reaction chloride(in) = chloride(out). With respect to regulation, channel opening is triggered by extracellular glycine. Channel opening is also triggered by taurine and beta-alanine. Inhibited by strychnine. Inhibited by picrotoxin. Subunit of heteromeric glycine-gated chloride channels. Plays a role in synaptic plasticity. Contributes to the generation of inhibitory postsynaptic currents, and is involved in the down-regulation of neuronal excitability. Plays a role in cellular responses to ethanol. This Rattus norvegicus (Rat) protein is Glycine receptor subunit alpha-2.